The following is a 674-amino-acid chain: Metal-nicotianamine transporter YSL2 (674 aa).

Positions 1-29 (MEAAAPEIERCDAGDVESDHDGAAAAAER) are disordered. Positions 7-22 (EIERCDAGDVESDHDG) are enriched in basic and acidic residues. Transmembrane regions (helical) follow at residues 41–61 (GMVA…KLAL), 64–84 (GIIP…LRGW), 118–138 (CAVA…LLAL), 162–182 (GVGW…LNLL), 224–244 (GFLN…FYTG), 283–303 (LVNL…WPLI), 329–349 (FMCV…VTGI), 392–412 (LAYA…PIMF), 420–440 (VVVA…GTGL), 452–472 (IALF…AGLV), 506–526 (VGQA…FLLF), 559–579 (SALP…SVLI), 604–624 (FLVG…VFAW), and 633–653 (ALLV…WMFP).

Belongs to the YSL (TC 2.A.67.2) family. As to expression, expressed in phloem cells of vascular bundles in leaves and leaf sheaths. Expressed at low levels in phloem companion cells in the central cylinder of roots, but not in the epidermal or cortical cells.

The protein localises to the cell membrane. In terms of biological role, involved in the phloem transport of iron and manganese and their translocation into the grain. Transports iron- and manganese-nicotianamine chelates, but not iron-phytosiderophore. In Oryza sativa subsp. japonica (Rice), this protein is Metal-nicotianamine transporter YSL2 (YSL2).